A 4882-amino-acid polypeptide reads, in one-letter code: Dual E2 ubiquitin-conjugating enzyme/E3 ubiquitin-protein ligase BIRC6 (4882 aa).

2 WD repeats span residues 71–109 and 110–139; these read DGLHSLSYHPALNAILAVTSRGTIKVIDGTSGATLQASA and LSAKPGGQVKCQYISAVDKVIFVDDYAVGC. Residues 292–362 form a BIR repeat; it reads RRETFTSWPH…RHSPNCPFVK (71 aa). Positions 331, 334, 351, and 358 each coordinate Zn(2+). The WD 3 repeat unit spans residues 382 to 429; that stretch reads LPSADGADRIACFGSGSCPQFLAAATKRGKICIWDVSKLMKVHLKFEI. Disordered stretches follow at residues 468-502, 542-561, and 582-622; these read DIPKLEGDSDDLLEDSDSEEHSRSDSVTGHTSQKE, GANPSLTNSKSEKTKEKHQE, and ATSP…SELN. The segment covering 475-485 has biased composition (acidic residues); it reads DSDDLLEDSDS. Phosphoserine is present on residues serine 476, serine 483, and serine 485. 4 WD repeats span residues 504-723, 733-854, 855-931, and 932-970; these read MEVS…VQCL, TLCI…QHIK, DPQD…AKVE, and PPKKEGTEEQDTFVSVIYCSGTDRLCACTKGGELHFLQI. The segment covering 551–561 has biased composition (basic and acidic residues); the sequence is KSEKTKEKHQE. The span at 582-591 shows a compositional bias: polar residues; sequence ATSPISSNSH. Serine 584 and serine 593 each carry phosphoserine. Residues 598 to 622 are compositionally biased toward polar residues; the sequence is SRTQGESISEQGSTDNESCTNSELN. The tract at residues 1057–1077 is disordered; it reads QQQRRHPQHLHQQHHGDAAQH. The segment covering 1060-1069 has biased composition (basic residues); sequence RRHPQHLHQQ. A Phosphothreonine modification is found at threonine 1724. Phosphoserine is present on residues serine 2245 and serine 2978. Positions 2969–2998 are disordered; the sequence is VTTNTTDSVSDEEKVSGGKDVNGSSASTPG. Residues 3212–3216 form an HRRAR loop; important for DIABLO/SMAC and HTRA2 binding region; it reads HRRAR. In terms of domain architecture, Ubiquitin-like spans 3842–4092; the sequence is DEKVTMFLQS…ESLLETCPIQ (251 aa). 2 disordered regions span residues 3908–3927 and 3943–3973; these read SEQKDDKEKKNHEEKEKVKA and LKSQSKRAMASTPPRPPSRRGRTIPDKIGSA. Residue threonine 3954 is modified to Phosphothreonine. Serine 4047 is modified (phosphoserine). The disordered stretch occupies residues 4285–4304; it reads VPNSSLSQTEPQVSNSHNPT. A compositionally biased stretch (polar residues) spans 4286–4304; it reads PNSSLSQTEPQVSNSHNPT. The region spanning 4598–4765 is the UBC core domain; it reads ARARRLAQEA…IRQATVKWAM (168 aa). Cysteine 4691 functions as the Glycyl thioester intermediate in the catalytic mechanism. The segment at 4857–4882 is disordered; the sequence is AGAEDTLTHDHVNPSSSKDLPSDFQL. A compositionally biased stretch (polar residues) spans 4869–4882; the sequence is NPSSSKDLPSDFQL.

Belongs to the BIRC6 family. As to quaternary structure, homodimer; antiparallel. Interacts with DIABLO/SMAC, likely with higher affinity to SMAC dimer than SMAC monomer; this interaction blocks the substrate-binding site and inhibits the caspase inhibition activity of BIRC6. Interacts with RNF41, KIF23/MKLP1, USP8/UBPY, BIRC5/survivin, MAP2K1/MEK1, RAB8A/RAB8, RAB11A/RAB11, PLK1, EXOC3/SEC6 and EXOC4/SEC8. Ubiquitinated. Ubiquitination is mediated by RNF41 E3 ligase and leads to proteasomal degradation, impairing inhibition of apoptosis. Deubiquitinated by USP8/UBPY. Autoubiquitinated; mediated by E1 ubiquitin activating enzyme UBA6. Post-translationally, proteolytically cleaved. Acts as substrate for CASP3, CASP6, CASP7, CASP9 and HTRA2. As to expression, widely expressed. Highly expressed in the brain and kidney.

It is found in the golgi apparatus. The protein localises to the trans-Golgi network membrane. The protein resides in the endosome. Its subcellular location is the cytoplasm. It localises to the cytoskeleton. It is found in the spindle pole. The protein localises to the microtubule organizing center. The protein resides in the centrosome. Its subcellular location is the midbody. It localises to the midbody ring. The catalysed reaction is S-ubiquitinyl-[E1 ubiquitin-activating enzyme]-L-cysteine + [acceptor protein]-L-lysine = [E1 ubiquitin-activating enzyme]-L-cysteine + N(6)-monoubiquitinyl-[acceptor protein]-L-lysine.. With respect to regulation, inhibited by DIABLO/SMAC, which competes for the substrate-binding sites on BIRC6. BIRC6 inhibits caspases and protease by ubiquitination but BIRC6 itself is subjected to protease cleavage by CASP3, CASP6, CASP7, CASP9 and HTRA2 by protease cleavage. Anti-apoptotic protein known as inhibitor of apoptosis (IAP) which can regulate cell death by controlling caspases and by acting as an E3 ubiquitin-protein ligase. Unlike most IAPs, does not contain a RING domain and it is not a RING-type E3 ligase. Instead acts as a dual E2/E3 enzyme that combines ubiquitin conjugating (E2) and ubiquitin ligase (E3) activities in a single polypeptide. Ubiquitination is mediated by a non-canonical E1 ubiquitin activating enzyme UBA6. Ubiquitinates CASP3, CASP7 and CASP9 and inhibits their caspase activity; also ubiquitinates their procaspases but to a weaker extent. Ubiquitinates pro-apoptotic factors DIABLO/SMAC and HTRA2. DIABLO/SMAC antagonizes the caspase inhibition activity of BIRC6 by competing for the same binding sites as the caspases. Ubiquitinates the autophagy protein MAP1LC3B; this activity is also inhibited by DIABLO/SMAC. Important regulator for the final stages of cytokinesis. Crucial for normal vesicle targeting to the site of abscission, but also for the integrity of the midbody and the midbody ring, and its striking ubiquitin modification. Required for normal placenta development. This Mus musculus (Mouse) protein is Dual E2 ubiquitin-conjugating enzyme/E3 ubiquitin-protein ligase BIRC6 (Birc6).